Here is a 476-residue protein sequence, read N- to C-terminus: Growth/differentiation factor 10 (476 aa).

The first 29 residues, 1 to 29 (MAPGPARISLGSQLLPMVPLLLLLRGAGC), serve as a signal peptide directing secretion. A propeptide spanning residues 30 to 366 (GHRGPSWSSL…EKTMQKARRR (337 aa)) is cleaved from the precursor. Residues 39–63 (LPSAAAGLQGDRDSQQSPGDAAAAL) are disordered. N114, N152, and N277 each carry an N-linked (GlcNAc...) asparagine glycan. Residues 268 to 301 (GDFEPGAAPNSSADPRVRRAAQVSKPLQDNELPG) form a disordered region. Cystine bridges form between C374–C441, C403–C473, and C407–C475. A glycan (N-linked (GlcNAc...) asparagine) is linked at N467.

It belongs to the TGF-beta family. In terms of assembly, homodimer or heterodimer. Can form a non-covalent complex of the mature region and the pro-region. In terms of tissue distribution, highly expressed in epididymal adipose tissue, brain, bone and aorta and to a lesser extent in liver and spleen. Expressed at higher levels in preadipocytes than in mature adipocytes. Strongly expressed in glial cells of the cerebellum.

It is found in the secreted. Functionally, growth factor involved in osteogenesis and adipogenesis. Plays an inhibitory role in the process of osteoblast differentiation via SMAD2/3 pathway. Plays an inhibitory role in the process of adipogenesis. The chain is Growth/differentiation factor 10 from Mus musculus (Mouse).